The sequence spans 311 residues: Pyrimidine-specific ribonucleoside hydrolase RihA (311 aa).

His-240 is a catalytic residue.

It belongs to the IUNH family. RihA subfamily.

Its function is as follows. Hydrolyzes cytidine or uridine to ribose and cytosine or uracil, respectively. This is Pyrimidine-specific ribonucleoside hydrolase RihA from Salmonella agona (strain SL483).